The primary structure comprises 385 residues: Uroporphyrinogen decarboxylase (385 aa).

Substrate is bound by residues 53 to 57, Asp-102, Tyr-179, Ser-234, and His-363; that span reads RQAGR.

The protein belongs to the uroporphyrinogen decarboxylase family. As to quaternary structure, homodimer.

It localises to the cytoplasm. It carries out the reaction uroporphyrinogen III + 4 H(+) = coproporphyrinogen III + 4 CO2. Its pathway is porphyrin-containing compound metabolism; protoporphyrin-IX biosynthesis; coproporphyrinogen-III from 5-aminolevulinate: step 4/4. Its function is as follows. Catalyzes the decarboxylation of four acetate groups of uroporphyrinogen-III to yield coproporphyrinogen-III. This chain is Uroporphyrinogen decarboxylase, found in Tropheryma whipplei (strain TW08/27) (Whipple's bacillus).